Reading from the N-terminus, the 120-residue chain is Acylphosphatase-1 (120 aa).

Ala2 carries the post-translational modification N-acetylalanine. Positions 8 to 98 (SCEFEVFGRV…YGYANFHIKP (91 aa)) constitute an Acylphosphatase-like domain. Residues Arg23 and Asn41 contribute to the active site. Residues 91 to 120 (YANFHIKPDPHENRPVHEGLGSSSSHHDSN) form a disordered region. The span at 96–107 (IKPDPHENRPVH) shows a compositional bias: basic and acidic residues.

The protein belongs to the acylphosphatase family.

The protein localises to the cytoplasm. The enzyme catalyses an acyl phosphate + H2O = a carboxylate + phosphate + H(+). The polypeptide is Acylphosphatase-1 (Acyp) (Drosophila melanogaster (Fruit fly)).